A 248-amino-acid chain; its full sequence is Undecaprenyl-diphosphatase (248 aa).

8 helical membrane passes run 4-24, 40-60, 74-94, 101-121, 134-154, 174-194, 201-221, and 228-248; these read IVLG…SGHL, FAFL…KEIV, YSLV…GFLF, SFSN…SLFV, ISYI…FPGI, ALKY…ILET, SYIL…LLIL, and KKLK…FFVG.

The protein belongs to the UppP family.

Its subcellular location is the cell inner membrane. It carries out the reaction di-trans,octa-cis-undecaprenyl diphosphate + H2O = di-trans,octa-cis-undecaprenyl phosphate + phosphate + H(+). Its function is as follows. Catalyzes the dephosphorylation of undecaprenyl diphosphate (UPP). Confers resistance to bacitracin. The protein is Undecaprenyl-diphosphatase of Thermosipho africanus (strain TCF52B).